We begin with the raw amino-acid sequence, 431 residues long: Adenylosuccinate synthetase (431 aa).

GTP contacts are provided by residues 13 to 19 and 41 to 43; these read GDEGKGK and GHT. The Proton acceptor role is filled by D14. D14 and G41 together coordinate Mg(2+). Residues 14 to 17, 39 to 42, T130, R144, Q225, T240, and R304 contribute to the IMP site; these read DEGK and NAGH. The Proton donor role is filled by H42. A substrate-binding site is contributed by 300-306; it reads ATTGRAR. GTP is bound by residues R306, 332 to 334, and 414 to 416; these read KLD and STG.

This sequence belongs to the adenylosuccinate synthetase family. As to quaternary structure, homodimer. Mg(2+) serves as cofactor.

The protein localises to the cytoplasm. The catalysed reaction is IMP + L-aspartate + GTP = N(6)-(1,2-dicarboxyethyl)-AMP + GDP + phosphate + 2 H(+). It participates in purine metabolism; AMP biosynthesis via de novo pathway; AMP from IMP: step 1/2. Functionally, plays an important role in the de novo pathway of purine nucleotide biosynthesis. Catalyzes the first committed step in the biosynthesis of AMP from IMP. This is Adenylosuccinate synthetase from Chromohalobacter salexigens (strain ATCC BAA-138 / DSM 3043 / CIP 106854 / NCIMB 13768 / 1H11).